The chain runs to 411 residues: Cytosolic Fe-S cluster assembly factor narfl (411 aa).

[4Fe-4S] cluster is bound by residues cysteine 11, cysteine 124, cysteine 180, cysteine 329, and cysteine 333.

The protein belongs to the NARF family. In terms of assembly, component of the CIA complex.

Its function is as follows. Component of the cytosolic iron-sulfur protein assembly (CIA) complex, a multiprotein complex that mediates the incorporation of iron-sulfur cluster into extramitochondrial Fe/S proteins. The chain is Cytosolic Fe-S cluster assembly factor narfl (narfl) from Danio rerio (Zebrafish).